The following is a 402-amino-acid chain: Nodulation protein E (402 aa).

Residues 2–401 (DRRVVITGMG…GTNAVLAFKQ (400 aa)) form the Ketosynthase family 3 (KS3) domain. Active-site for beta-ketoacyl synthase activity residues include Cys162, His294, and His331. Residues 329–348 (HAHCIGAASALEMIACVMAI) traverse the membrane as a helical segment.

It belongs to the thiolase-like superfamily. Beta-ketoacyl-ACP synthases family.

The protein localises to the cell inner membrane. In terms of biological role, proposed to synthesize NOD factor fatty acyl chain. Involved in the synthesis of a highly unsaturated fatty acid moiety, which forms part of a lipo-oligosaccharide that is responsible for host specificity. This Rhizobium meliloti (strain 1021) (Ensifer meliloti) protein is Nodulation protein E (nodE).